Consider the following 76-residue polypeptide: Anaredoxin (76 aa).

One can recognise an HNH domain in the interval 24 to 66 (CMVCWEVNSKANGHHLIPYSEGGSADIQNMMTLCPSCHTKYHK).

It belongs to the HNH nuclease family.

Putative P-450 reductase. The protein is Anaredoxin of Nostoc sp. (strain PCC 7120 / SAG 25.82 / UTEX 2576).